The sequence spans 403 residues: Renin (403 aa).

A signal peptide spans 1-22; sequence MARCRMPRWGLLLVLWGSCTFG. The propeptide at 23 to 65 is activation peptide; sequence LPADTGAFRRIFLKKMPSIRESLKERGVDVAGLGAEWNQFTKR. An N-linked (GlcNAc...) asparagine glycan is attached at Asn70. Residues 85–400 enclose the Peptidase A1 domain; it reads YYGEIGIGTP…DRHNNRIGFA (316 aa). Asp103 is a catalytic residue. Cys116 and Cys123 are joined by a disulfide. Asn140 carries an N-linked (GlcNAc...) asparagine glycan. The cysteines at positions 279 and 283 are disulfide-linked. The active site involves Asp288. Cys322 and Cys359 are disulfide-bonded.

The protein belongs to the peptidase A1 family. Interacts with ATP6AP2.

It localises to the secreted. Its subcellular location is the membrane. It carries out the reaction Cleavage of Leu-|-Xaa bond in angiotensinogen to generate angiotensin I.. Interaction with ATP6AP2 results in a 5-fold increased efficiency in angiotensinogen processing. Renin is a highly specific endopeptidase, whose only known function is to generate angiotensin I from angiotensinogen in the plasma, initiating a cascade of reactions that produce an elevation of blood pressure and increased sodium retention by the kidney. This is Renin (REN) from Canis lupus familiaris (Dog).